We begin with the raw amino-acid sequence, 304 residues long: Quinolinate synthase (304 aa).

Residues H23 and S40 each coordinate iminosuccinate. C86 lines the [4Fe-4S] cluster pocket. Iminosuccinate contacts are provided by residues 112–114 and S129; that span reads YVN. C173 is a [4Fe-4S] cluster binding site. Iminosuccinate is bound by residues 199–201 and T216; that span reads HPE. C260 lines the [4Fe-4S] cluster pocket.

The protein belongs to the quinolinate synthase family. Type 2 subfamily. [4Fe-4S] cluster serves as cofactor.

It is found in the cytoplasm. The enzyme catalyses iminosuccinate + dihydroxyacetone phosphate = quinolinate + phosphate + 2 H2O + H(+). Its pathway is cofactor biosynthesis; NAD(+) biosynthesis; quinolinate from iminoaspartate: step 1/1. Functionally, catalyzes the condensation of iminoaspartate with dihydroxyacetone phosphate to form quinolinate. The polypeptide is Quinolinate synthase (Methanothermobacter thermautotrophicus (strain ATCC 29096 / DSM 1053 / JCM 10044 / NBRC 100330 / Delta H) (Methanobacterium thermoautotrophicum)).